Reading from the N-terminus, the 184-residue chain is Transcription termination/antitermination protein NusG (184 aa).

The region spanning 133–163 (EGDQVRVVSGPFADFTGTVTEINPERGKVKV) is the KOW domain.

This sequence belongs to the NusG family.

In terms of biological role, participates in transcription elongation, termination and antitermination. This is Transcription termination/antitermination protein NusG from Thermus thermophilus (strain ATCC 27634 / DSM 579 / HB8).